Consider the following 2272-residue polypeptide: Voltage-dependent R-type calcium channel subunit alpha-1E (2272 aa).

Positions 1-40 (MARFGEAVVVGRPGSGDGDSDQSRNRQGTPVPASGPAAAY) are disordered. Residues 1–90 (MARFGEAVVV…KYAKKLIDWP (90 aa)) lie on the Cytoplasmic side of the membrane. Phosphoserine occurs at positions 15 and 20. The stretch at 77-355 (NIVRKYAKKL…LVLGVLSGEF (279 aa)) is one I repeat. The helical transmembrane segment at 91 to 109 (PFEYMILATIIANCIVLAL) threads the bilayer. Over 110–128 (EQHLPEDDKTPMSRRLEKT) the chain is Extracellular. Residues 129-147 (EPYFIGIFCFEAGIKIVAL) form a helical membrane-spanning segment. Topologically, residues 148–159 (GFIFHKGSYLRN) are cytoplasmic. The chain crosses the membrane as a helical span at residues 160-174 (GWNVMDFIVVLSGIL). Residues 175-186 (ATAGTHFNTHVD) are Extracellular-facing. The chain crosses the membrane as a helical span at residues 187 to 206 (LRALRAVRVLRPLKLVSGIP). Topologically, residues 207 to 224 (SLQIVLKSIMKAMVPLLQ) are cytoplasmic. Residues 225–245 (IGLLLFFAILMFAIIGLEFYS) traverse the membrane as a helical segment. Over 246 to 327 (GKLHRACFMN…NTNDALGATW (82 aa)) the chain is Extracellular. A glycan (N-linked (GlcNAc...) asparagine) is linked at Asn255. A helical membrane pass occupies residues 328-351 (NWLYFIPLIIIGSFFVLNLVLGVL). Over 352–477 (SGEFAKERER…ISIRHMVKSQ (126 aa)) the chain is Cytoplasmic. Residues 375 to 392 (QQIERELNGYRAWIDKAE) are binding to the beta subunit. Asp427 contacts Ca(2+). Position 428 is a phosphoserine (Ser428). Positions 429, 431, 433, and 438 each coordinate Ca(2+). A Phosphothreonine modification is found at Thr441. The stretch at 463-707 (ERLLRISIRH…VFLAIAVDNL (245 aa)) is one II repeat. The helical transmembrane segment at 478-497 (VFYWIVLSVVALNTACVAIV) threads the bilayer. Residues 498–510 (HHNQPQWLTHLLY) lie on the Extracellular side of the membrane. A helical transmembrane segment spans residues 511–530 (YAEFLFLGLFLLEMSLKMYG). Residues 531 to 539 (MGPRLYFHS) lie on the Cytoplasmic side of the membrane. A helical transmembrane segment spans residues 540-558 (SFNCFDFGVTVGSIFEVVW). The Extracellular portion of the chain corresponds to 559–568 (AIFRPGTSFG). The helical transmembrane segment at 569–587 (ISVLRALRLLRIFKITKYW) threads the bilayer. Topologically, residues 588 to 606 (ASLRNLVVSLMSSMKSIIS) are cytoplasmic. The helical transmembrane segment at 607-626 (LLFLLFLFIVVFALLGMQLF) threads the bilayer. Residues 627–679 (GGRFNFNDGTPSANFDTFPAAIMTVFQILTGEDWNEVMYNGIRSQGGVSSGMW) lie on the Extracellular side of the membrane. A helical transmembrane segment spans residues 680–704 (SAIYFIVLTLFGNYTLLNVFLAIAV). Residues 705-1150 (DNLANAQELT…TTNPIRRACH (446 aa)) lie on the Cytoplasmic side of the membrane. A disordered region spans residues 730–777 (LQKAKEVSPMSAPNMPSIERDRRRRHHMSMWEPRSSHLRERRRRHHMS). Phosphoserine occurs at positions 737, 746, 794, 816, and 856. Disordered stretches follow at residues 854-994 (GGSL…VPRG) and 1091-1127 (SNKTDGEASPLKEAETKEEEEEVEKKKKQKKEKRETG). The segment covering 914–927 (RHRQSQRRSRHRRV) has biased composition (basic residues). A compositionally biased stretch (low complexity) spans 934–946 (SASASRSRSASQE). Residue Ser948 is modified to Phosphoserine. Composition is skewed to basic and acidic residues over residues 956–985 (EGEKEHEPHSSHRSKEPTIHEEERTQDLRR) and 1094–1105 (TDGEASPLKEAE). A Phosphoserine modification is found at Ser1099. One copy of the III repeat lies at 1143–1429 (NPIRRACHYI…IFVALIIITF (287 aa)). A helical membrane pass occupies residues 1151 to 1167 (YIVNLRYFEMCILLVIA). The Extracellular segment spans residues 1168–1191 (ASSIALAAEDPVLTNSERNKVLRY). A helical membrane pass occupies residues 1192 to 1211 (FDYVFTGVFTFEMVIKMIDQ). The Cytoplasmic portion of the chain corresponds to 1212–1219 (GLILQDGS). A helical membrane pass occupies residues 1220 to 1242 (YFRDLWNILDFVVVVGALVAFAL). Residues 1243 to 1256 (ANALGTNKGRDIKT) are Extracellular-facing. Residues 1257 to 1274 (IKSLRVLRVLRPLKTIKR) traverse the membrane as a helical segment. Over 1275 to 1293 (LPKLKAVFDCVVTSLKNVF) the chain is Cytoplasmic. The chain crosses the membrane as a helical span at residues 1294–1313 (NILIVYKLFMFIFAVIAVQL). The Extracellular segment spans residues 1314–1400 (FKGKFFYCTD…DRGPSRSNRM (87 aa)). A helical membrane pass occupies residues 1401–1424 (EMSIFYVVYFVVFPFFFVNIFVAL). At 1425–1481 (IIITFQEQGDKMMEECSLEKNERACIDFAISAKPLTRYMPQNRHTFQYRVWHFVVSP) the chain is on the cytoplasmic side. One copy of the IV repeat lies at 1466–1729 (NRHTFQYRVW…LFVAVIMDNF (264 aa)). Residues 1482–1500 (SFEYTIMAMIALNTVVLMM) form a helical membrane-spanning segment. Topologically, residues 1501-1515 (KYYTAPCTYELALKY) are extracellular. The chain crosses the membrane as a helical span at residues 1516–1535 (LNIAFTMVFSLECVLKVIAF). Residues 1536–1543 (GFLNYFRD) lie on the Cytoplasmic side of the membrane. Residues 1544-1562 (TWNIFDFITVIGSITEIIL) traverse the membrane as a helical segment. Over 1563 to 1573 (TDSKLVNTSGF) the chain is Extracellular. Asn1569 carries an N-linked (GlcNAc...) asparagine glycan. The helical transmembrane segment at 1574–1592 (NMSFLKLFRAARLIKLLRQ) threads the bilayer. Residues 1593 to 1611 (GYTIRILLWTFVQSFKALP) are Cytoplasmic-facing. Residues 1612-1631 (YVCLLIAMLFFIYAIIGMQV) form a helical membrane-spanning segment. Residues 1632-1700 (FGNIKLDEES…QNESERCGTD (69 aa)) are Extracellular-facing. Asn1692 is a glycosylation site (N-linked (GlcNAc...) asparagine). A helical membrane pass occupies residues 1701-1726 (LAYVYFVSFIFFCSFLMLNLFVAVIM). The Cytoplasmic portion of the chain corresponds to 1727-2272 (DNFEYLTRDS…LSDTEEDDKC (546 aa)). In terms of domain architecture, EF-hand spans 1742–1777 (HHLDEFVRVWAEYDRAACGRIHYTEMYEMLTLMSPP). Ca(2+) contacts are provided by Asp1755, Arg1761, and Glu1766. The tract at residues 2021 to 2186 (SAHRLNSDSG…QQGQHPSPQH (166 aa)) is disordered. Residues 2025–2045 (LNSDSGHKSDTHRSGGRERGR) are compositionally biased toward basic and acidic residues. Ser2054 and Ser2073 each carry phosphoserine. The segment covering 2061–2078 (NSEERGTQADWESPERRQ) has biased composition (basic and acidic residues). Residues 2097 to 2112 (SLSESSIPSISDTSTP) show a composition bias toward low complexity. Polar residues predominate over residues 2155–2174 (LASQALESNSACLTESSNSL). The segment covering 2175–2186 (HPQQGQHPSPQH) has biased composition (low complexity).

The protein belongs to the calcium channel alpha-1 subunit (TC 1.A.1.11) family. CACNA1E subfamily. In terms of assembly, interacts with EFHC1. Voltage-dependent calcium channels are multisubunit complexes, consisting of alpha-1, alpha-2, beta and delta subunits in a 1:1:1:1 ratio. The channel activity is directed by the pore-forming and voltage-sensitive alpha-1 subunit. In many cases, this subunit is sufficient to generate voltage-sensitive calcium channel activity. The auxiliary subunits beta and alpha-2/delta linked by a disulfide bridge regulate the channel activity. In terms of tissue distribution, expressed in neuronal tissues, retina, spleen, and pancreatic islet cells.

Its subcellular location is the membrane. It carries out the reaction Ca(2+)(in) = Ca(2+)(out). Its function is as follows. Voltage-sensitive calcium channels (VSCC) mediate the entry of calcium ions into excitable cells and are also involved in a variety of calcium-dependent processes, including muscle contraction, hormone or neurotransmitter release, gene expression, cell motility, cell division and cell death. The isoform alpha-1E gives rise to R-type calcium currents. R-type calcium channels belong to the 'high-voltage activated' (HVA) group and are blocked by nickel. They are however insensitive to dihydropyridines (DHP). Calcium channels containing alpha-1E subunit could be involved in the modulation of firing patterns of neurons which is important for information processing. This Mus musculus (Mouse) protein is Voltage-dependent R-type calcium channel subunit alpha-1E (Cacna1e).